The following is a 908-amino-acid chain: Glutamate receptor ionotropic, kainate 2 (908 aa).

The first 31 residues, Met1–Gly31, serve as a signal peptide directing secretion. Topologically, residues Thr32–Pro561 are extracellular. Residues Asn67, Asn73, Asn275, Asn378, Asn412, Asn423, and Asn430 are each glycosylated (N-linked (GlcNAc...) asparagine). A disulfide bridge connects residues Cys96 and Cys347. Residues Pro516, Ala518, and Arg523 each coordinate L-glutamate. Asn546 carries an N-linked (GlcNAc...) asparagine glycan. A helical transmembrane segment spans residues Asp562–Ala582. Over Arg583–Gly638 the chain is Cytoplasmic. A helical membrane pass occupies residues Ile639–Leu659. Over Thr660–Asn819 the chain is Extracellular. Residues Ala689, Thr690, and Glu738 each coordinate L-glutamate. Cys750 and Cys804 are oxidised to a cystine. Asn751 carries an N-linked (GlcNAc...) asparagine glycan. The helical transmembrane segment at Ile820 to Gly840 threads the bilayer. Topologically, residues Glu841–Ala908 are cytoplasmic. A phosphoserine; by PKC mark is found at Ser846 and Ser868. Lys886 is covalently cross-linked (Glycyl lysine isopeptide (Lys-Gly) (interchain with G-Cter in SUMO1)).

It belongs to the glutamate-gated ion channel (TC 1.A.10.1) family. GRIK2 subfamily. Homotetramer and heterotetramer with GRIK5. Tetramers may be formed by the dimerization of dimers. Assembles into a kainate-gated homomeric channel that does not bind AMPA. Can form functional heteromeric receptors with GRIK3, GRIK4 and GRIK5. Interacts with NETO2. Interacts with DLG4. Interacts with NETO2. Interacts (via C-terminus) with KLHL17 (via kelch repeats); the interaction targets GRIK2 for degradation via ubiquitin-proteasome pathway. In terms of processing, sumoylation mediates kainate receptor-mediated endocytosis and regulates synaptic transmission. Sumoylation is enhanced by PIAS3 and desumoylated by SENP1. Post-translationally, ubiquitinated. Ubiquitination regulates the GRIK2 levels at the synapse by leading kainate receptor degradation through proteasome. Phosphorylated by PKC at Ser-868 upon agonist activation, this directly enhance sumoylation.

It is found in the cell membrane. The protein localises to the postsynaptic cell membrane. It carries out the reaction Ca(2+)(in) = Ca(2+)(out). It catalyses the reaction Na(+)(in) = Na(+)(out). With respect to regulation, cold receptor activity activated by temperatures between 10-19 degrees Celsius. Its function is as follows. Ionotropic glutamate receptor that functions as a cation-permeable ligand-gated ion channel, gated by L-glutamate and the glutamatergic agonist kainic acid. L-glutamate acts as an excitatory neurotransmitter at many synapses in the central nervous system. Binding of the excitatory neurotransmitter L-glutamate induces a conformation change, leading to the opening of the cation channel, and thereby converts the chemical signal to an electrical impulse. The receptor then desensitizes rapidly and enters a transient inactive state, characterized by the presence of bound agonist. Modulates cell surface expression of NETO2. In association with GRIK3, involved in presynaptic facilitation of glutamate release at hippocampal mossy fiber synapses. Independent of its ionotropic glutamate receptor activity, acts as a thermoreceptor conferring sensitivity to cold temperatures. Functions in dorsal root ganglion neurons. This Macaca fascicularis (Crab-eating macaque) protein is Glutamate receptor ionotropic, kainate 2 (GRIK2).